A 712-amino-acid polypeptide reads, in one-letter code: Glycine--tRNA ligase beta subunit (712 aa).

It belongs to the class-II aminoacyl-tRNA synthetase family. Tetramer of two alpha and two beta subunits.

The protein resides in the cytoplasm. It catalyses the reaction tRNA(Gly) + glycine + ATP = glycyl-tRNA(Gly) + AMP + diphosphate. The chain is Glycine--tRNA ligase beta subunit from Acaryochloris marina (strain MBIC 11017).